The chain runs to 600 residues: Single-strand DNA endonuclease 1 (600 aa).

Residues 1-97 (MGVKYLWDVL…KRRLKARFEI (97 aa)) are N-domain. The segment at 2 to 97 (GVKYLWDVLE…KRRLKARFEI (96 aa)) is XPG-N domain. Asp-30, Asp-76, Glu-142, Glu-144, Asp-163, Asp-165, and Asp-215 together coordinate Mg(2+). Residues 130–215 (STLGILCLDG…IALALLLGSD (86 aa)) are XPG-I domain. I-domain regions lie at residues 130-218 (STLG…DYSQ) and 130-219 (STLG…YSQG). The interval 215 to 353 (DYSQGVRGLR…ILPKVAERNL (139 aa)) is 5'-3' exonuclease domain. Residues 433-458 (MAAKKKKPKPKQKQKETSSPTKSSSL) are disordered. A compositionally biased stretch (basic residues) spans 435–444 (AKKKKPKPKQ).

This sequence belongs to the XPG/RAD2 endonuclease family. GEN subfamily. The cofactor is Mg(2+).

Its subcellular location is the nucleus. Endonuclease which cleaves flap structures at the junction between single-stranded DNA and double-stranded DNA with a specific cleavage site in the 5' overhang strand exactly one nucleotide 3' of the branch point. Structure- and sequence-specific nuclease that resolves holliday junctions (HJs) by symmetrically oriented incisions in two opposing strands near the junction point, thus leading to ligatable products; HJs are physical links between homologous DNA molecules that arise as central intermediary structures during homologous recombination and repair in meiotic and somatic cells. Structure-specific nuclease with 5'-flap endonuclease activity, preferentially cleaving static flaps 5' overhang strand exactly one nucleotide in the 3' direction of the branch point and, to lower extent, on the two neighboring positions. Also able to cleave double-stranded flap strand 1 one nucleotide in the 3' direction of the branch point. Together with MUS81, essential for the resolution of toxic replication structures to ensure genome stability, and to maintain telomere integrity and replication. The polypeptide is Single-strand DNA endonuclease 1 (Arabidopsis thaliana (Mouse-ear cress)).